A 53-amino-acid chain; its full sequence is Mannose/glucose-specific lectin alpha 1 chain (53 aa).

Belongs to the leguminous lectin family. As to quaternary structure, tetramer of two alpha and two beta chains.

This is Mannose/glucose-specific lectin alpha 1 chain from Lathyrus ochrus (Cyprus-vetch).